The primary structure comprises 185 residues: Elongation factor P (185 aa).

This sequence belongs to the elongation factor P family.

The protein resides in the cytoplasm. Its pathway is protein biosynthesis; polypeptide chain elongation. In terms of biological role, involved in peptide bond synthesis. Stimulates efficient translation and peptide-bond synthesis on native or reconstituted 70S ribosomes in vitro. Probably functions indirectly by altering the affinity of the ribosome for aminoacyl-tRNA, thus increasing their reactivity as acceptors for peptidyl transferase. This Thermotoga petrophila (strain ATCC BAA-488 / DSM 13995 / JCM 10881 / RKU-1) protein is Elongation factor P.